The chain runs to 534 residues: NAD(P)H-quinone oxidoreductase subunit 2 (534 aa).

14 helical membrane-spanning segments follow: residues 15 to 35 (ILPE…DLIL), 42 to 62 (WIGY…YFQW), 79 to 99 (LSIV…LMSI), 109 to 129 (LAEF…LSGA), 132 to 152 (LVMI…LTGY), 167 to 187 (LLIG…LYGL), 210 to 230 (LGLV…ISAA), 244 to 264 (PTPV…ALAI), 280 to 300 (FVFT…ALAQ), 306 to 326 (MLAY…IAGT), 334 to 354 (IFYL…IILF), 378 to 398 (LGLS…GFFG), 410 to 432 (GLYW…YIRV), and 466 to 486 (VGLV…NPLF).

It belongs to the complex I subunit 2 family. NDH-1 can be composed of about 15 different subunits; different subcomplexes with different compositions have been identified which probably have different functions.

The protein resides in the cellular thylakoid membrane. It catalyses the reaction a plastoquinone + NADH + (n+1) H(+)(in) = a plastoquinol + NAD(+) + n H(+)(out). The enzyme catalyses a plastoquinone + NADPH + (n+1) H(+)(in) = a plastoquinol + NADP(+) + n H(+)(out). Functionally, NDH-1 shuttles electrons from an unknown electron donor, via FMN and iron-sulfur (Fe-S) centers, to quinones in the respiratory and/or the photosynthetic chain. The immediate electron acceptor for the enzyme in this species is believed to be plastoquinone. Couples the redox reaction to proton translocation, and thus conserves the redox energy in a proton gradient. Cyanobacterial NDH-1 also plays a role in inorganic carbon-concentration. This chain is NAD(P)H-quinone oxidoreductase subunit 2, found in Nostoc punctiforme (strain ATCC 29133 / PCC 73102).